Consider the following 431-residue polypeptide: Neuronal pentraxin-2 (431 aa).

An N-terminal signal peptide occupies residues 1–15; it reads MLALLAASVALAVAA. 2 N-linked (GlcNAc...) asparagine glycosylation sites follow: asparagine 148 and asparagine 189. The Pentraxin (PTX) domain occupies 223–424; sequence DAFKVSLPLR…GASKWPVETC (202 aa). Cysteine 253 and cysteine 313 are joined by a disulfide. Residues asparagine 277, glutamate 355, glutamine 356, aspartate 357, and glutamine 367 each contribute to the Ca(2+) site. An N-linked (GlcNAc...) asparagine glycan is attached at asparagine 393.

As to quaternary structure, homooligomer or heterooligomer (probably pentamer) with neuronal pentraxin receptor (NPTXR). Ca(2+) is required as a cofactor. As to expression, brain, pancreas, liver, heart and skeletal muscle. Highest levels are seen in the testis.

The protein localises to the secreted. Its function is as follows. Likely to play role in the modification of cellular properties that underlie long-term plasticity. Binds to agar matrix in a calcium-dependent manner. The polypeptide is Neuronal pentraxin-2 (NPTX2) (Homo sapiens (Human)).